We begin with the raw amino-acid sequence, 218 residues long: Probable nicotinate-nucleotide adenylyltransferase (218 aa).

It belongs to the NadD family.

It carries out the reaction nicotinate beta-D-ribonucleotide + ATP + H(+) = deamido-NAD(+) + diphosphate. It functions in the pathway cofactor biosynthesis; NAD(+) biosynthesis; deamido-NAD(+) from nicotinate D-ribonucleotide: step 1/1. In terms of biological role, catalyzes the reversible adenylation of nicotinate mononucleotide (NaMN) to nicotinic acid adenine dinucleotide (NaAD). The chain is Probable nicotinate-nucleotide adenylyltransferase from Burkholderia cenocepacia (strain ATCC BAA-245 / DSM 16553 / LMG 16656 / NCTC 13227 / J2315 / CF5610) (Burkholderia cepacia (strain J2315)).